We begin with the raw amino-acid sequence, 149 residues long: Ribonuclease H (149 aa).

In terms of domain architecture, RNase H type-1 spans 1 to 142 (MSTITIHTDG…ADELAREGLA (142 aa)). Positions 9, 47, 70, and 134 each coordinate Mg(2+). Residues 124–149 (HAGDPGNERADELAREGLAEARGRQP) are disordered. Basic and acidic residues predominate over residues 129 to 149 (GNERADELAREGLAEARGRQP).

Belongs to the RNase H family. As to quaternary structure, monomer. Mg(2+) serves as cofactor.

The protein resides in the cytoplasm. It carries out the reaction Endonucleolytic cleavage to 5'-phosphomonoester.. In terms of biological role, endonuclease that specifically degrades the RNA of RNA-DNA hybrids. The polypeptide is Ribonuclease H (Maricaulis maris (strain MCS10) (Caulobacter maris)).